The following is a 512-amino-acid chain: Altronate oxidoreductase (512 aa).

26–37 (VLQFGEGNFLRG) lines the NAD(+) pocket.

This sequence belongs to the mannitol dehydrogenase family. UxaB subfamily.

The catalysed reaction is D-altronate + NAD(+) = keto-D-tagaturonate + NADH + H(+). Its pathway is carbohydrate metabolism; pentose and glucuronate interconversion. In Halalkalibacterium halodurans (strain ATCC BAA-125 / DSM 18197 / FERM 7344 / JCM 9153 / C-125) (Bacillus halodurans), this protein is Altronate oxidoreductase.